The following is a 620-amino-acid chain: Glutathione-regulated potassium-efflux system protein KefC (620 aa).

12 helical membrane-spanning segments follow: residues 4–24 (HTLL…PIAV), 26–46 (LGLG…PWGL), 54–74 (SILH…GLEL), 90–110 (GALQ…FLGL), 114–134 (VAEL…MQAM), 149–169 (FAVL…IPLL), 178–198 (LGAF…VVLL), 218–238 (VFSA…EEVG), 270–290 (GLLL…GTLV), 294–314 (LRIL…LWLV), 327–347 (WFAV…GAAQ), and 359–379 (ALTL…VLLT). The RCK N-terminal domain maps to 399–518 (QPRVIVAGFG…AGVAMPERET (120 aa)). The tract at residues 599–620 (QGTAEGKHSGEVADEPEVKPSI) is disordered.

It belongs to the monovalent cation:proton antiporter 2 (CPA2) transporter (TC 2.A.37) family. KefC subfamily. In terms of assembly, homodimer. Interacts with the regulatory subunit KefF.

It localises to the cell inner membrane. Pore-forming subunit of a potassium efflux system that confers protection against electrophiles. Catalyzes K(+)/H(+) antiport. The chain is Glutathione-regulated potassium-efflux system protein KefC from Salmonella agona (strain SL483).